Reading from the N-terminus, the 386-residue chain is Chorismate synthase (386 aa).

NADP(+) contacts are provided by Arg-45 and Arg-51. FMN contacts are provided by residues 131–133 (RTS), 251–252 (QG), Ser-294, 309–313 (KPIPS), and Arg-335.

This sequence belongs to the chorismate synthase family. As to quaternary structure, homotetramer. FMNH2 serves as cofactor.

It carries out the reaction 5-O-(1-carboxyvinyl)-3-phosphoshikimate = chorismate + phosphate. The protein operates within metabolic intermediate biosynthesis; chorismate biosynthesis; chorismate from D-erythrose 4-phosphate and phosphoenolpyruvate: step 7/7. Functionally, catalyzes the anti-1,4-elimination of the C-3 phosphate and the C-6 proR hydrogen from 5-enolpyruvylshikimate-3-phosphate (EPSP) to yield chorismate, which is the branch point compound that serves as the starting substrate for the three terminal pathways of aromatic amino acid biosynthesis. This reaction introduces a second double bond into the aromatic ring system. The polypeptide is Chorismate synthase (Clostridium tetani (strain Massachusetts / E88)).